The sequence spans 267 residues: Indole-3-glycerol phosphate synthase (267 aa).

The protein belongs to the TrpC family.

It carries out the reaction 1-(2-carboxyphenylamino)-1-deoxy-D-ribulose 5-phosphate + H(+) = (1S,2R)-1-C-(indol-3-yl)glycerol 3-phosphate + CO2 + H2O. It functions in the pathway amino-acid biosynthesis; L-tryptophan biosynthesis; L-tryptophan from chorismate: step 4/5. This Delftia acidovorans (strain DSM 14801 / SPH-1) protein is Indole-3-glycerol phosphate synthase.